A 95-amino-acid chain; its full sequence is Aspartyl/glutamyl-tRNA(Asn/Gln) amidotransferase subunit C (95 aa).

This sequence belongs to the GatC family. As to quaternary structure, heterotrimer of A, B and C subunits.

It catalyses the reaction L-glutamyl-tRNA(Gln) + L-glutamine + ATP + H2O = L-glutaminyl-tRNA(Gln) + L-glutamate + ADP + phosphate + H(+). The catalysed reaction is L-aspartyl-tRNA(Asn) + L-glutamine + ATP + H2O = L-asparaginyl-tRNA(Asn) + L-glutamate + ADP + phosphate + 2 H(+). Allows the formation of correctly charged Asn-tRNA(Asn) or Gln-tRNA(Gln) through the transamidation of misacylated Asp-tRNA(Asn) or Glu-tRNA(Gln) in organisms which lack either or both of asparaginyl-tRNA or glutaminyl-tRNA synthetases. The reaction takes place in the presence of glutamine and ATP through an activated phospho-Asp-tRNA(Asn) or phospho-Glu-tRNA(Gln). The sequence is that of Aspartyl/glutamyl-tRNA(Asn/Gln) amidotransferase subunit C from Acidithiobacillus ferrooxidans (strain ATCC 23270 / DSM 14882 / CIP 104768 / NCIMB 8455) (Ferrobacillus ferrooxidans (strain ATCC 23270)).